Here is a 455-residue protein sequence, read N- to C-terminus: MDMANQLLDELAHGNFSHLTLNLSQNGREIAILQKQLTGFDDKQLETFVEQHPAMPNDTRFKIMCTSFLNYARDVDPWSAWSSSDLIFEFYQCLINCLINDNAPHIEMLIPVATRETEFIINLAGKLDSFHLQLHTRSHQFLSHISSILSRLFNSIKPPRGNASSTNIPGKQRILLYLVNKLNNIYFRIESPQLCSNIFKNFQPKSMLAHFNEYQLDQQIEYRYLLGRYYLLNSQVHNAFVQFNEAFQSLLNLPLTNQAITRNGTRILNYMIPTGLILGKMVKWGPLRPFLSQETIDNWSVLYKHVRYGNIQGVSLWLRQNERHLCARQLLIVLLEKLPMVTYRNLIKTVIKSWTTEWGQNKLPYSLIERVLQLSIGPTFEDPGAQEITIYNGIHSPKNVENVLVTLINLGLLRANCFPQLQLCVVKKTTMIQEIVPPVNERITKMFPAHSHVLW.

The 212-residue stretch at 220–431 (IEYRYLLGRY…QLCVVKKTTM (212 aa)) folds into the PCI domain.

Heterodimer with THP1. The SAC3-THP1 complex interacts with CDC31 and SUS1, and with the mRNA export factor MEX67-MTR2, the TREX complex component SUB2, and the nucleoporin NUP1.

It localises to the nucleus envelope. Functionally, component of the SAC3-THP1 complex, which functions in transcription-coupled mRNA export from the nucleus to the cytoplasm. SAC3-THP1 functions in docking export-competent ribonucleoprotein particles (mRNPs) to the nuclear entrance of the nuclear pore complex (nuclear basket), by association with components of the nuclear mRNA export machinery (MEX67-MTR2 and SUB2) in the nucleoplasm and the nucleoporin NUP1 at the nuclear basket. THP1 binds to RNA in vitro. The protein is Nuclear mRNA export protein THP1 (THP1) of Saccharomyces cerevisiae (strain ATCC 204508 / S288c) (Baker's yeast).